A 220-amino-acid chain; its full sequence is 7-cyano-7-deazaguanine synthase 1 (220 aa).

Residue 10–20 (FSGGIDSTVLL) participates in ATP binding. Zn(2+) is bound by residues Cys183, Cys191, Cys194, and Cys197.

Belongs to the QueC family. Homodimer. The cofactor is Zn(2+).

It carries out the reaction 7-carboxy-7-deazaguanine + NH4(+) + ATP = 7-cyano-7-deazaguanine + ADP + phosphate + H2O + H(+). It functions in the pathway purine metabolism; 7-cyano-7-deazaguanine biosynthesis. Functionally, catalyzes the ATP-dependent conversion of 7-carboxy-7-deazaguanine (CDG) to 7-cyano-7-deazaguanine (preQ(0)). This is 7-cyano-7-deazaguanine synthase 1 from Desulfitobacterium hafniense (strain Y51).